The primary structure comprises 465 residues: Phosphatidylserine synthase 1 (465 aa).

Residues 1 to 35 lie on the Cytoplasmic side of the membrane; the sequence is MATTFRSQTLSKDDVNYRMHFRMINEQQVEDITIQ. Residues 36–56 form a helical membrane-spanning segment; the sequence is FFYKPHTISLLTVTVLSLMYF. Topologically, residues 57–70 are lumenal; that stretch reads AFTRDDGDPDSNLR. Residues 71 to 91 traverse the membrane as a helical segment; it reads VGLILLVSFFLVISVLAFPNG. The Cytoplasmic portion of the chain corresponds to 92 to 102; sequence PFTRPHPAIWR. A helical transmembrane segment spans residues 103–123; sequence IVFGLSVLYFLFLVFIIFLNW. At 124–286 the chain is on the lumenal side; it reads DQVKALMFWL…WLDPKSSLQR (163 aa). Residues 287-307 form a helical membrane-spanning segment; sequence VMGVYLFMIIWQLTELNTFFL. The Cytoplasmic portion of the chain corresponds to 308 to 309; sequence KH. The helical transmembrane segment at 310–330 threads the bilayer; it reads IFVFPACHALSWCRILFIGII. Topologically, residues 331–355 are lumenal; it reads TAPTVRQYYAYLTDTQCKRVGTQCW. Residues 356–376 traverse the membrane as a helical segment; sequence VFGAIAFLEALACIKFGQDLF. Residues 377–380 lie on the Cytoplasmic side of the membrane; it reads SKTQ. The helical transmembrane segment at 381-401 threads the bilayer; the sequence is ILYVILWLVCLAFITFLCLYV. Topologically, residues 402–465 are lumenal; sequence MVWYAENYGP…DSRTINGMEK (64 aa). Residues 446–465 are disordered; the sequence is CSTRKRRDSGDSRTINGMEK.

This sequence belongs to the phosphatidyl serine synthase family.

It localises to the endoplasmic reticulum membrane. It carries out the reaction a 1,2-diacyl-sn-glycero-3-phosphoethanolamine + L-serine = a 1,2-diacyl-sn-glycero-3-phospho-L-serine + ethanolamine. The enzyme catalyses a 1,2-diacyl-sn-glycero-3-phosphocholine + L-serine = a 1,2-diacyl-sn-glycero-3-phospho-L-serine + choline. It participates in phospholipid metabolism; phosphatidylserine biosynthesis. Functionally, catalyzes a base-exchange reaction in which the polar head group of phosphatidylethanolamine (PE) or phosphatidylcholine (PC) is replaced by L-serine. Catalyzes mainly the conversion of phosphatidylcholine but also converts, in vitro and to a lesser extent, phosphatidylethanolamine. This is Phosphatidylserine synthase 1 (ptdss1) from Danio rerio (Zebrafish).